The sequence spans 250 residues: Phosphonates import ATP-binding protein PhnC (250 aa).

Residues 2 to 247 enclose the ABC transporter domain; sequence IVFNNVNKVW…KLDAQAMKKI (246 aa). 35–42 lines the ATP pocket; it reads GLSGAGKT.

The protein belongs to the ABC transporter superfamily. Phosphonates importer (TC 3.A.1.9.1) family. In terms of assembly, the complex is composed of two ATP-binding proteins (PhnC), two transmembrane proteins (PhnE) and a solute-binding protein (PhnD).

It is found in the cell membrane. It carries out the reaction phosphonate(out) + ATP + H2O = phosphonate(in) + ADP + phosphate + H(+). In terms of biological role, part of the ABC transporter complex PhnCDE involved in phosphonates import. Responsible for energy coupling to the transport system. The sequence is that of Phosphonates import ATP-binding protein PhnC from Mycoplasma mycoides subsp. mycoides SC (strain CCUG 32753 / NCTC 10114 / PG1).